Consider the following 69-residue polypeptide: Large ribosomal subunit protein bL28 (69 aa).

The segment at 1-27 (MSRRCSVSGKGPLVGNNVSHANNKTKR) is disordered.

It belongs to the bacterial ribosomal protein bL28 family.

The sequence is that of Large ribosomal subunit protein bL28 from Sulfurovum sp. (strain NBC37-1).